A 455-amino-acid polypeptide reads, in one-letter code: Golgi pH regulator (455 aa).

2 consecutive transmembrane segments (helical) span residues 5 to 25 and 46 to 66; these read ADSVLMVISQLLFFGFGWLFF and VTFAFSCTMFELIIFEILGLL. The N-linked (GlcNAc...) asparagine glycan is linked to Asn-67. Transmembrane regions (helical) follow at residues 79–99, 111–131, and 150–170; these read LCVILLVLVFVVPFYIGYFVV, LFSCTIWLTFMYFFWKLGDPF, and VGVIGVTLMALLSGFGAVNCP. N-linked (GlcNAc...) asparagine glycosylation occurs at Asn-180. Helical transmembrane passes span 290-310, 343-363, 378-398, and 425-445; these read GYFFSIYCVWKIFMATINIVF, ISFILVGIIIVTSIRGLLITL, VIVLLLAQIMGMYFVSSVLLI, and WFDVIFLVSALSSILFLYLAH.

It belongs to the Golgi pH regulator (TC 1.A.38) family. Homotrimer.

The protein localises to the golgi apparatus membrane. It catalyses the reaction iodide(out) = iodide(in). The catalysed reaction is chloride(in) = chloride(out). It carries out the reaction bromide(in) = bromide(out). The enzyme catalyses fluoride(in) = fluoride(out). In terms of biological role, voltage-gated channel that enables the transfer of anions such as iodide, chloride, bromide and fluoride which may function in counter-ion conductance and participates in Golgi acidification. This is Golgi pH regulator (gpr89-b) from Xenopus laevis (African clawed frog).